The primary structure comprises 105 residues: Fe-S protein maturation auxiliary factor PG_1777 (105 aa).

It belongs to the Fe-S cluster assembly domain superfamily. MIP18-like family. Putative homodimer; may be disulfide-linked.

Functionally, iron binding protein that protects DNA from Fenton chemistry-mediated damage caused by hydrogen peroxide induced oxidative stress. May be involved in iron-sulfur cluster assembly. This Porphyromonas gingivalis (strain ATCC BAA-308 / W83) protein is Fe-S protein maturation auxiliary factor PG_1777.